Here is a 238-residue protein sequence, read N- to C-terminus: Thrombin-like enzyme gyroxin B2.1 (238 aa).

The 229-residue stretch at 1-229 (VIGGDECNIN…HLDWIQNIIA (229 aa)) folds into the Peptidase S1 domain. Cystine bridges form between C7–C141, C28–C44, C78–C236, C120–C190, C152–C169, and C180–C205. H43 serves as the catalytic Charge relay system. Residue N81 is glycosylated (N-linked (GlcNAc...) asparagine). D88 (charge relay system) is an active-site residue. The Charge relay system role is filled by S184.

The protein belongs to the peptidase S1 family. Snake venom subfamily. As to quaternary structure, monomer. In terms of tissue distribution, expressed by the venom gland.

It localises to the secreted. Thrombin-like snake venom serine protease. Displays a specificity similar to trypsin. Releases only fibrinopeptide A in the conversion of fibrinogen (FGA) to fibrin. Shows coagulant, esterase and amidase activities. Reversibly increases the permeability of the blood brain barrier (BBB) in mice. Induces the barrel rotation syndrome in mice, which is manifested by gyroxin-like, rapid rolling motions. This syndrome may be due to its effect on BBB permeability, and certainly also to other actions affecting endogenous substrates present in the endothelium, nervous tissues or blood. This chain is Thrombin-like enzyme gyroxin B2.1, found in Crotalus durissus terrificus (South American rattlesnake).